The sequence spans 589 residues: Arginine--tRNA ligase (589 aa).

Residues 131 to 141 (ANPTGPLHVGH) carry the 'HIGH' region motif.

Belongs to the class-I aminoacyl-tRNA synthetase family. Monomer.

The protein localises to the cytoplasm. It catalyses the reaction tRNA(Arg) + L-arginine + ATP = L-arginyl-tRNA(Arg) + AMP + diphosphate. This is Arginine--tRNA ligase from Legionella pneumophila subsp. pneumophila (strain Philadelphia 1 / ATCC 33152 / DSM 7513).